Reading from the N-terminus, the 166-residue chain is NAD(P)H-quinone oxidoreductase subunit I, chloroplastic (166 aa).

4Fe-4S ferredoxin-type domains are found at residues 55-84 (GRIHFEFDKCIACEVCVRVCPIDLPVVDWK) and 95-124 (LNYSIDFGICIFCGNCVEYCPTNCLSMTEE). The [4Fe-4S] cluster site is built by C64, C67, C70, C74, C104, C107, C110, and C114.

It belongs to the complex I 23 kDa subunit family. As to quaternary structure, NDH is composed of at least 16 different subunits, 5 of which are encoded in the nucleus. The cofactor is [4Fe-4S] cluster.

It localises to the plastid. The protein resides in the chloroplast thylakoid membrane. It carries out the reaction a plastoquinone + NADH + (n+1) H(+)(in) = a plastoquinol + NAD(+) + n H(+)(out). The catalysed reaction is a plastoquinone + NADPH + (n+1) H(+)(in) = a plastoquinol + NADP(+) + n H(+)(out). Functionally, NDH shuttles electrons from NAD(P)H:plastoquinone, via FMN and iron-sulfur (Fe-S) centers, to quinones in the photosynthetic chain and possibly in a chloroplast respiratory chain. The immediate electron acceptor for the enzyme in this species is believed to be plastoquinone. Couples the redox reaction to proton translocation, and thus conserves the redox energy in a proton gradient. The sequence is that of NAD(P)H-quinone oxidoreductase subunit I, chloroplastic from Acanthospermum australe (Paraguayan starburr).